The sequence spans 239 residues: O-antigen export system ATP-binding protein RfbE (239 aa).

Positions 28 to 239 (VRVSTGGRIG…LIYEESMDIL (212 aa)) constitute an ABC transporter domain. Position 66-73 (66-73 (GHNGAGKS)) interacts with ATP.

This sequence belongs to the ABC transporter superfamily.

The protein resides in the cell inner membrane. Its function is as follows. May form an ATP-driven O-antigen export apparatus, in association with RfbD. The protein is O-antigen export system ATP-binding protein RfbE (rfbE) of Yersinia enterocolitica.